Reading from the N-terminus, the 726-residue chain is Catalase-peroxidase (726 aa).

Residues 96–224 constitute a cross-link (tryptophyl-tyrosyl-methioninium (Trp-Tyr) (with M-250)); the sequence is WHSAGTYRIA…LAAVMMGLIY (129 aa). H97 acts as the Proton acceptor in catalysis. The tryptophyl-tyrosyl-methioninium (Tyr-Met) (with W-96) cross-link spans 224–250; sequence YVNPEGVDGKPDPLKTAHDMRVTFARM. H265 serves as a coordination point for heme b.

Belongs to the peroxidase family. Peroxidase/catalase subfamily. As to quaternary structure, homodimer or homotetramer. It depends on heme b as a cofactor. In terms of processing, formation of the three residue Trp-Tyr-Met cross-link is important for the catalase, but not the peroxidase activity of the enzyme.

The enzyme catalyses H2O2 + AH2 = A + 2 H2O. It carries out the reaction 2 H2O2 = O2 + 2 H2O. Its function is as follows. Bifunctional enzyme with both catalase and broad-spectrum peroxidase activity. The sequence is that of Catalase-peroxidase from Vibrio campbellii (strain ATCC BAA-1116).